The following is a 280-amino-acid chain: Cis-2,3-dihydrobiphenyl-2,3-diol dehydrogenase (280 aa).

9–33 (LVTGGCAGLGRAIVDRFVCEGARVA) is a binding site for NAD(+). Substrate is bound at residue Ser142. Catalysis depends on Tyr155, which acts as the Proton acceptor.

This sequence belongs to the short-chain dehydrogenases/reductases (SDR) family.

It carries out the reaction (2R,3S)-3-phenylcyclohexa-3,5-diene-1,2-diol + NAD(+) = biphenyl-2,3-diol + NADH + H(+). It participates in xenobiotic degradation; biphenyl degradation; 2-hydroxy-2,4-pentadienoate and benzoate from biphenyl: step 2/4. This Rhodococcus globerulus protein is Cis-2,3-dihydrobiphenyl-2,3-diol dehydrogenase (bphB).